A 147-amino-acid chain; its full sequence is Transthyretin (147 aa).

The first 20 residues, 1 to 20, serve as a signal peptide directing secretion; the sequence is MASLRLFLLCLAGLIFASEA. The residue at position 30 (Cys-30) is a Sulfocysteine. Lys-35 provides a ligand contact to L-thyroxine. Residue Glu-62 is modified to 4-carboxyglutamate. A Phosphoserine modification is found at Ser-72. Glu-74 lines the L-thyroxine pocket. Asn-118 is a glycosylation site (N-linked (GlcNAc...) asparagine). Residue Ser-137 coordinates L-thyroxine.

The protein belongs to the transthyretin family. As to quaternary structure, homotetramer. Dimer of dimers. In the homotetramer, subunits assemble around a central channel that can accommodate two ligand molecules. Interacts with RBP4. Post-translationally, sulfonation of the reactive cysteine Cys-30 enhances the stability of the native conformation of TTR, avoiding misassembly of the protein leading to amyloid formation. In terms of tissue distribution, detected in serum and cerebrospinal fluid (at protein level). Highly expressed in the choroid plexus. Detected at lower levels in the liver.

Its subcellular location is the secreted. In terms of biological role, thyroid hormone-binding protein. Probably transports thyroxine from the bloodstream to the brain. In Rattus norvegicus (Rat), this protein is Transthyretin (Ttr).